Reading from the N-terminus, the 132-residue chain is Small ribosomal subunit protein uS8 (132 aa).

It belongs to the universal ribosomal protein uS8 family. As to quaternary structure, part of the 30S ribosomal subunit. Contacts proteins S5 and S12.

Functionally, one of the primary rRNA binding proteins, it binds directly to 16S rRNA central domain where it helps coordinate assembly of the platform of the 30S subunit. This Anaeromyxobacter dehalogenans (strain 2CP-1 / ATCC BAA-258) protein is Small ribosomal subunit protein uS8.